Reading from the N-terminus, the 838-residue chain is Polyribonucleotide nucleotidyltransferase (838 aa).

2 residues coordinate Mg(2+): Asp-494 and Asp-500. A KH domain is found at 561–620 (PRMESMLIDKGKIKNVIGAGGKNVREICEKTGAKIEISQDGTVMIYAVGREAIESAKDMI). In terms of domain architecture, S1 motif spans 630 to 697 (GKIYSGEVCE…DKDHIQLSMR (68 aa)). The segment covering 747-757 (GGASAGRNGRG) has biased composition (gly residues). Residues 747–838 (GGASAGRNGR…PAAPKKPRFF (92 aa)) form a disordered region. The segment covering 788–810 (AGSSGYSSDSSSGNTKSSSSESS) has biased composition (low complexity). A compositionally biased stretch (gly residues) spans 811–820 (GGTGGRGRNG).

Belongs to the polyribonucleotide nucleotidyltransferase family. Mg(2+) serves as cofactor.

The protein resides in the cytoplasm. The catalysed reaction is RNA(n+1) + phosphate = RNA(n) + a ribonucleoside 5'-diphosphate. Its function is as follows. Involved in mRNA degradation. Catalyzes the phosphorolysis of single-stranded polyribonucleotides processively in the 3'- to 5'-direction. This Anaplasma phagocytophilum (strain HZ) protein is Polyribonucleotide nucleotidyltransferase.